Consider the following 78-residue polypeptide: Large ribosomal subunit protein bL28 (78 aa).

The protein belongs to the bacterial ribosomal protein bL28 family.

This Ruthia magnifica subsp. Calyptogena magnifica protein is Large ribosomal subunit protein bL28.